A 313-amino-acid polypeptide reads, in one-letter code: MKKLNIIFAGTPDISAQVLKDLYKSQYNIQAVLTQPDRAKGRGKKVQFSPVKEVALANHTPVFQPLSFKKNPEVLEQIKQLKPDVIVVIAYGIIVPQEFLDIPRYGCLNIHVSLLPKWRGAAPIQRAIQAGDTKTGVCIMQMDAGLDTGDILNTLEIEIQETDTSQTLHDKFAKLSIKPLLETLEKIEIIKPEPQQGEPTYAHKITKQEGLIDFTKSAWQISCHIRAFTPWPGAYFILDDEAIKVGEFEILYQNTDNRKAGTIIDIYRSGFDIATSDKIIRFRQLQFPNKKMLNIVDILNGKDLDKYIGYKLG.

113 to 116 contacts (6S)-5,6,7,8-tetrahydrofolate; it reads SLLP.

Belongs to the Fmt family.

It carries out the reaction L-methionyl-tRNA(fMet) + (6R)-10-formyltetrahydrofolate = N-formyl-L-methionyl-tRNA(fMet) + (6S)-5,6,7,8-tetrahydrofolate + H(+). Its function is as follows. Attaches a formyl group to the free amino group of methionyl-tRNA(fMet). The formyl group appears to play a dual role in the initiator identity of N-formylmethionyl-tRNA by promoting its recognition by IF2 and preventing the misappropriation of this tRNA by the elongation apparatus. This chain is Methionyl-tRNA formyltransferase, found in Francisella tularensis subsp. mediasiatica (strain FSC147).